The sequence spans 75 residues: RNA-binding protein KhpA (75 aa).

A KH domain is found at 29–75 (SIILELKVSPEDMGKVIGKQGRIAKAIRTVVKAAAIKENKKVVVEII).

It belongs to the KhpA RNA-binding protein family. Forms a complex with KhpB.

Its subcellular location is the cytoplasm. Its function is as follows. A probable RNA chaperone. Forms a complex with KhpB which binds to cellular RNA and controls its expression. Plays a role in peptidoglycan (PG) homeostasis and cell length regulation. This is RNA-binding protein KhpA from Clostridium perfringens (strain 13 / Type A).